Reading from the N-terminus, the 219-residue chain is Small ribosomal subunit protein uS3c (219 aa).

The 71-residue stretch at 39–109 (IRQYIEKNLS…QIRINVIEVK (71 aa)) folds into the KH type-2 domain.

It belongs to the universal ribosomal protein uS3 family. As to quaternary structure, part of the 30S ribosomal subunit.

The protein resides in the plastid. The protein localises to the cyanelle. The polypeptide is Small ribosomal subunit protein uS3c (rps3) (Cyanophora paradoxa).